We begin with the raw amino-acid sequence, 971 residues long: UPF0182 protein CMS1887 (971 aa).

7 helical membrane-spanning segments follow: residues 16-36 (LAIT…FAGF), 56-76 (WGAG…PVFV), 108-128 (LAMF…ASSG), 161-181 (FYHA…LGVL), 205-225 (IQIA…IWLD), 255-275 (TILA…AAIG), and 281-301 (IIGT…YPAI). Over residues 687 to 702 (QDLWTTPNDPTATTEA) the composition is skewed to polar residues. Disordered regions lie at residues 687 to 706 (QDLW…GTPA) and 874 to 924 (GATA…AQDV). 2 stretches are compositionally biased toward low complexity: residues 884-900 (PTTP…TDGA) and 907-921 (STPT…AAPA).

It belongs to the UPF0182 family.

The protein resides in the cell membrane. The polypeptide is UPF0182 protein CMS1887 (Clavibacter sepedonicus (Clavibacter michiganensis subsp. sepedonicus)).